Here is a 248-residue protein sequence, read N- to C-terminus: Large ribosomal subunit protein uL30 (248 aa).

Position 1 is an N-acetylmethionine (methionine 1). A run of 4 repeats spans residues 7–18 (KKKKVPAVPETL), 19–30 (KKKRKNFAELKI), 31–42 (KRLRKKFAQKML), and 43–54 (RKARRKLIYEKA). The 4 X 12 AA tandem repeats stretch occupies residues 7 to 54 (KKKKVPAVPETLKKKRKNFAELKIKRLRKKFAQKMLRKARRKLIYEKA). A Phosphothreonine modification is found at threonine 17. N6-acetyllysine is present on lysine 124. Lysine 127 carries the post-translational modification N6-succinyllysine. Tyrosine 139 carries the phosphotyrosine modification.

The protein belongs to the universal ribosomal protein uL30 family. Component of the large ribosomal subunit. Homodimer. Interacts with DHX33.

It is found in the cytoplasm. In terms of biological role, component of the large ribosomal subunit. The ribosome is a large ribonucleoprotein complex responsible for the synthesis of proteins in the cell. Binds to G-rich structures in 28S rRNA and in mRNAs. Plays a regulatory role in the translation apparatus; inhibits cell-free translation of mRNAs. The protein is Large ribosomal subunit protein uL30 (RPL7) of Bos taurus (Bovine).